The chain runs to 1393 residues: DNA-directed RNA polymerase subunit beta' (1393 aa).

The Zn(2+) site is built by Cys72, Cys74, Cys87, and Cys90. Mg(2+)-binding residues include Asp463, Asp465, and Asp467. Cys812, Cys887, Cys894, and Cys897 together coordinate Zn(2+).

This sequence belongs to the RNA polymerase beta' chain family. The RNAP catalytic core consists of 2 alpha, 1 beta, 1 beta' and 1 omega subunit. When a sigma factor is associated with the core the holoenzyme is formed, which can initiate transcription. Requires Mg(2+) as cofactor. Zn(2+) is required as a cofactor.

It carries out the reaction RNA(n) + a ribonucleoside 5'-triphosphate = RNA(n+1) + diphosphate. Functionally, DNA-dependent RNA polymerase catalyzes the transcription of DNA into RNA using the four ribonucleoside triphosphates as substrates. This chain is DNA-directed RNA polymerase subunit beta', found in Chlamydia caviae (strain ATCC VR-813 / DSM 19441 / 03DC25 / GPIC) (Chlamydophila caviae).